Reading from the N-terminus, the 94-residue chain is Aspartyl/glutamyl-tRNA(Asn/Gln) amidotransferase subunit C (94 aa).

Residues 72–94 (PREKALQGAPEVSEGQFKVPRVV) are disordered.

It belongs to the GatC family. Heterotrimer of A, B and C subunits.

The catalysed reaction is L-glutamyl-tRNA(Gln) + L-glutamine + ATP + H2O = L-glutaminyl-tRNA(Gln) + L-glutamate + ADP + phosphate + H(+). It catalyses the reaction L-aspartyl-tRNA(Asn) + L-glutamine + ATP + H2O = L-asparaginyl-tRNA(Asn) + L-glutamate + ADP + phosphate + 2 H(+). Its function is as follows. Allows the formation of correctly charged Asn-tRNA(Asn) or Gln-tRNA(Gln) through the transamidation of misacylated Asp-tRNA(Asn) or Glu-tRNA(Gln) in organisms which lack either or both of asparaginyl-tRNA or glutaminyl-tRNA synthetases. The reaction takes place in the presence of glutamine and ATP through an activated phospho-Asp-tRNA(Asn) or phospho-Glu-tRNA(Gln). This is Aspartyl/glutamyl-tRNA(Asn/Gln) amidotransferase subunit C from Moorella thermoacetica (strain ATCC 39073 / JCM 9320).